Consider the following 486-residue polypeptide: Patatin-like phospholipase domain-containing protein 2 (486 aa).

Residues Met-1 to Trp-8 lie on the Cytoplasmic side of the membrane. A helical membrane pass occupies residues Asn-9–Leu-29. One can recognise a PNPLA domain in the interval Ile-10–Lys-179. The GXGXXG motif lies at Gly-14–Gly-19. Residues Arg-30 to His-42 are Extracellular-facing. Asn-39 carries N-linked (GlcNAc...) asparagine glycosylation. The helical transmembrane segment at Ile-43–Gly-63 threads the bilayer. The GXSXG motif lies at Gly-45–Gly-49. Ser-47 serves as the catalytic Nucleophile. Residues Glu-64–Glu-137 lie on the Cytoplasmic side of the membrane. A Glycyl lysine isopeptide (Lys-Gly) (interchain with G-Cter in ubiquitin) cross-link involves residue Lys-92. A helical membrane pass occupies residues Leu-138–Ser-158. Over Leu-159–Arg-334 the chain is Extracellular. Catalysis depends on Asp-166, which acts as the Proton acceptor. The short motif at Asp-166 to Gly-168 is the DGA/G element. The helical transmembrane segment at Leu-335–Ile-355 threads the bilayer. At Arg-356 to Cys-486 the chain is on the cytoplasmic side. Ser-377 carries the phosphoserine; in vitro modification. Phosphoserine; by PKA occurs at positions 399 and 409. Ser-433 is modified (phosphoserine; in vitro).

As to quaternary structure, interacts with ABHD5; this association stimulates PNPLA2 triglyceride hydrolase activity. Interacts with SERPINF1; this interaction stimulates the phospholipase A2 activity of PNPLA2. Despite a colocalization in lipid droplets, it probably does not interact with PLIN. Interacts with PLIN5; prevents interaction with ABHD5. Interacts with FAF2. Post-translationally, phosphorylation at Ser-409 by PKA is increased during fasting and moderate intensity exercise, and moderately increases lipolytic activity. Ubiquitinated by PEX2 in response to reactive oxygen species (ROS), leading to its degradation. Ubiquitination is stimulated by LDAH.

The protein resides in the lipid droplet. It localises to the cell membrane. Its subcellular location is the cytoplasm. It catalyses the reaction a triacylglycerol + H2O = a diacylglycerol + a fatty acid + H(+). The catalysed reaction is a triacylglycerol + H2O = a 1,2-diacylglycerol + a fatty acid + H(+). The enzyme catalyses a triacylglycerol + H2O = a 1,3-diacylglycerol + a fatty acid + H(+). It carries out the reaction a triacyl-sn-glycerol + H2O = a 1,3-diacyl-sn-glycerol + a fatty acid + H(+). It catalyses the reaction a triacyl-sn-glycerol + H2O = a 2,3-diacyl-sn-glycerol + a fatty acid + H(+). The catalysed reaction is a 1-acylglycerol + a 1,3-diacylglycerol = a triacylglycerol + glycerol. The enzyme catalyses a 1-acylglycerol + a 1,2-diacylglycerol = a triacylglycerol + glycerol. It carries out the reaction 2 a 1-acylglycerol = a 1,2-diacylglycerol + glycerol. It catalyses the reaction a triacylglycerol + all-trans-retinol = an all-trans-retinyl ester + a diacylglycerol. The catalysed reaction is 1,2-di-(9Z-octadecenoyl)-glycerol + (9Z)-octadecenoate + H(+) = 1,2,3-tri-(9Z-octadecenoyl)-glycerol + H2O. The enzyme catalyses 1,2,3-tri-(9Z-octadecenoyl)-glycerol + H2O = 1,3-di-(9Z-octadecenoyl)-glycerol + (9Z)-octadecenoate + H(+). It carries out the reaction 1-(9Z-octadecenoyl)-glycerol + 1,3-di-(9Z-octadecenoyl)-glycerol = 1,2,3-tri-(9Z-octadecenoyl)-glycerol + glycerol. It catalyses the reaction 1-(9Z-octadecenoyl)-glycerol + 1,2-di-(9Z-octadecenoyl)-glycerol = 1,2,3-tri-(9Z-octadecenoyl)-glycerol + glycerol. The catalysed reaction is 2 1-(9Z-octadecenoyl)-glycerol = 1,2-di-(9Z-octadecenoyl)-glycerol + glycerol. The enzyme catalyses 1,2,3-tri-(9Z-octadecenoyl)-glycerol + all-trans-retinol = all-trans-retinyl 9Z-octadecenoate + di-(9Z)-octadecenoylglycerol. It carries out the reaction 1,2,3-tri-(9Z)-hexadecenoylglycerol + H2O = 1,3-di-(9Z)-hexadecenoylglycerol + (9Z)-hexadecenoate + H(+). It catalyses the reaction 1,2,3-tri-(9Z,12Z)-octadecadienoylglycerol + H2O = 1,3-di-(9Z,12Z)-octadecadienoylglycerol + (9Z,12Z)-octadecadienoate + H(+). The catalysed reaction is 1,2,3-tri-(9Z,12Z,15Z)-octadecatrienoylglycerol + H2O = 1,3-di-(9Z,12Z,15Z)-octadecatrienoylglycerol + (9Z,12Z,15Z)-octadecatrienoate + H(+). The enzyme catalyses 1,3-di-(9Z)-octadecenoyl-2-hexadecanoylglycerol + H2O = 1,3-di-(9Z-octadecenoyl)-glycerol + hexadecanoate + H(+). It carries out the reaction 1,2-di-(9Z)-octadecenoyl-3-hexadecanoyl-sn-glycerol + H2O = 1-(9Z)-octadecenoyl-3-hexadecanoyl-sn-glycerol + (9Z)-octadecenoate + H(+). It catalyses the reaction 1-hexadecanoyl-2,3-di-(9Z)-octadecenoyl-sn-glycerol + H2O = 1-hexadecanoyl-3-(9Z)-octadecenoyl-sn-glycerol + (9Z)-octadecenoate + H(+). The catalysed reaction is 1,2,3-tri-(9Z-octadecenoyl)-glycerol + H2O = 2,3-di-(9Z)-octadecenoyl-sn-glycerol + (9Z)-octadecenoate + H(+). The enzyme catalyses 1,2,3-tri-(9Z)-hexadecenoylglycerol + H2O = 2,3-di-(9Z)-hexadecenoyl-sn-glycerol + (9Z)-hexadecenoate + H(+). It carries out the reaction 1,2,3-tri-(9Z,12Z)-octadecadienoylglycerol + H2O = 2,3-di-(9Z,12Z)-octadecadienoyl-sn-glycerol + (9Z,12Z)-octadecadienoate + H(+). It catalyses the reaction 1,2,3-tri-(9Z,12Z,15Z)-octadecatrienoylglycerol + H2O = 2,3-di-(9Z,12Z,15Z)-octadecatrienoyl-sn-glycerol + (9Z,12Z,15Z)-octadecatrienoate + H(+). The catalysed reaction is 1,3-di-(9Z)-octadecenoyl-2-hexadecanoylglycerol + H2O = 2-hexadecanoyl-3-(9Z)-octadecenoyl-sn-glycerol + (9Z)-octadecenoate + H(+). The enzyme catalyses 1-hexadecanoyl-2,3-di-(9Z)-octadecenoyl-sn-glycerol + H2O = 2,3-di-(9Z)-octadecenoyl-sn-glycerol + hexadecanoate + H(+). It carries out the reaction 1,2-di-(9Z)-octadecenoyl-3-hexadecanoyl-sn-glycerol + H2O = 2-(9Z-octadecenoyl)-3-hexadecanoyl-sn-glycerol + (9Z)-octadecenoate + H(+). It catalyses the reaction a 1,2-diacyl-sn-glycero-3-phosphocholine + H2O = a 1-acyl-sn-glycero-3-phosphocholine + a fatty acid + H(+). The catalysed reaction is 1,2,3-tri-(9Z-octadecenoyl)-glycerol + 9-hydroxy-octadecanoate = 9-(9Z-octadecenoyloxy)-octadecanoate + 2,3-di-(9Z)-octadecenoyl-sn-glycerol. The enzyme catalyses 1-hexadecanoyl-2,3-di-(9Z)-octadecenoyl-sn-glycerol + 9-hydroxy-octadecanoate = 9-hexadecanoyloxy-octadecanoate + 2,3-di-(9Z)-octadecenoyl-sn-glycerol. It carries out the reaction 1,2,3-tri-(10Z)-heptadecenoylglycerol + 9-hydroxy-octadecanoate = 2,3-di-(10Z-heptadecenoyl)-sn-glycerol + 9-(10Z-heptadecenoyloxy)-octadecanoate. It catalyses the reaction 1,2,3-tri-(9Z,12Z)-octadecadienoylglycerol + 9-hydroxy-octadecanoate = 2,3-di-(9Z,12Z)-octadecadienoyl-sn-glycerol + 9-(9Z,12Z-octadecadienoyloxy)-octadecanoate. The catalysed reaction is 1,2,3-tri-(9Z)-hexadecenoylglycerol + 9-hydroxy-octadecanoate = 2,3-di-(9Z)-hexadecenoyl-sn-glycerol + 9-(9Z-hexadecenoyloxy)-octadecanoate. The enzyme catalyses 9-hydroxy-octadecanoate + 1,2-di-(9Z-octadecenoyl)-sn-glycerol = 9-(9Z-octadecenoyloxy)-octadecanoate + 2-(9Z-octadecenoyl)-glycerol. It carries out the reaction 1-hexadecanoyl-2,3-di-(9Z)-octadecenoyl-sn-glycerol + 9-hydroxy-octadecanoate = 1-hexadecanoyl-3-(9Z)-octadecenoyl-sn-glycerol + 9-(9Z-octadecenoyloxy)-octadecanoate. It functions in the pathway glycerolipid metabolism; triacylglycerol degradation. Functionally, catalyzes the initial step in triglyceride hydrolysis in adipocyte and non-adipocyte lipid droplets. Exhibits a strong preference for the hydrolysis of long-chain fatty acid esters at the sn-2 position of the glycerol backbone and acts coordinately with LIPE/HLS and DGAT2 within the lipolytic cascade. Also possesses acylglycerol transacylase and phospholipase A2 activities. Transfers fatty acid from triglyceride to retinol, hydrolyzes retinylesters, and generates 1,3-diacylglycerol from triglycerides. Regulates adiposome size and may be involved in the degradation of adiposomes. Catalyzes the formation of an ester bond between hydroxy fatty acids and fatty acids derived from triglycerides or diglycerides to generate fatty acid esters of hydroxy fatty acids (FAHFAs) in adipocytes. Acts antagonistically with LDAH in regulation of cellular lipid stores. Inhibits LDAH-stimulated lipid droplet fusion. May play an important role in energy homeostasis. May play a role in the response of the organism to starvation, enhancing hydrolysis of triglycerides and providing free fatty acids to other tissues to be oxidized in situations of energy depletion. The polypeptide is Patatin-like phospholipase domain-containing protein 2 (PNPLA2) (Bos taurus (Bovine)).